Here is a 545-residue protein sequence, read N- to C-terminus: Solute carrier family 22 member 6 (545 aa).

Over 1–9 (MAFNDLLKQ) the chain is Cytoplasmic. The chain crosses the membrane as a helical span at residues 10-30 (VGGVGRFQLIQVTMVVAPLLL). At 31-129 (MASHNTLQNF…LVCSHRAFRQ (99 aa)) the chain is on the extracellular side. N-linked (GlcNAc...) asparagine glycosylation is found at Asn-39, Asn-56, Asn-86, Asn-91, and Asn-107. Residues 130–150 (LAQSLFMVGVLLGAMMFGYLA) traverse the membrane as a helical segment. Over 151–157 (DRLGRRK) the chain is Cytoplasmic. The helical transmembrane segment at 158 to 177 (VLILNYLQTAVSGTCAAYAP) threads the bilayer. Asn-178 is a glycosylation site (N-linked (GlcNAc...) asparagine). Residues 178–180 (NYT) lie on the Extracellular side of the membrane. Residues 181–201 (VYCIFRLLSGMSLASIAINCM) traverse the membrane as a helical segment. Over 202 to 218 (TLNMEWMPIHTRAYVGT) the chain is Cytoplasmic. The chain crosses the membrane as a helical span at residues 219-239 (LIGYVYSLGQFLLAGIAYAVP). Topologically, residues 240 to 242 (HWR) are extracellular. Residues 243–263 (HLQLAVSVPFFVAFIYSWFFI) form a helical membrane-spanning segment. The Cytoplasmic portion of the chain corresponds to 264-331 (ESARWYSSSG…ELLRCPTLRR (68 aa)). The helical transmembrane segment at 332 to 352 (LFLCLSMLWFATSFAYYGLVM) threads the bilayer. Topologically, residues 353 to 362 (DLQGFGVSMY) are extracellular. Residues 363 to 383 (LIQVIFGAVDLPAKFVCFLVI) form a helical membrane-spanning segment. Residues 384–389 (NSMGRR) are Cytoplasmic-facing. Residues 390–410 (PAQLASLLLAGICILVNGIIP) form a helical membrane-spanning segment. At 411–419 (RGHTIIRTS) the chain is on the extracellular side. The chain crosses the membrane as a helical span at residues 420 to 440 (LAVLGKGCLASSFNCIFLYTG). Residues 441 to 450 (ELYPTMIRQT) lie on the Cytoplasmic side of the membrane. A helical transmembrane segment spans residues 451–471 (GLGMGSTMARVGSIVSPLISM). Over 472–478 (TAEFYPS) the chain is Extracellular. Residues 479 to 499 (IPLFIFGAVPVAASAVTALLP) form a helical membrane-spanning segment. The Cytoplasmic segment spans residues 500–545 (ETLGQPLPDTVQDLKSRSRGKQKQQQLEQQKQMIPLQVSTQEKNGL). The tract at residues 515–545 (SRSRGKQKQQQLEQQKQMIPLQVSTQEKNGL) is disordered. Low complexity predominate over residues 522–531 (KQQQLEQQKQ). Positions 536-545 (QVSTQEKNGL) are enriched in polar residues.

Belongs to the major facilitator (TC 2.A.1) superfamily. Organic cation transporter (TC 2.A.1.19) family. Post-translationally, glycosylated. Glycosylation is necessary for proper targeting of the transporter to the plasma membrane. Expressed in kidney. In kidney, restricted to the proximal convoluted tubule (representing S1 and S2 segments). In brain, expressed in neurons of the cortex cerebri and hippocampus as well as in the ependymal cell layer of the choroid plexus.

The protein resides in the basolateral cell membrane. The protein localises to the basal cell membrane. It catalyses the reaction (6R)-L-erythro-5,6,7,8-tetrahydrobiopterin(out) + a dicarboxylate(in) = (6R)-L-erythro-5,6,7,8-tetrahydrobiopterin(in) + a dicarboxylate(out). The catalysed reaction is L-erythro-7,8-dihydrobiopterin(out) + a dicarboxylate(in) = L-erythro-7,8-dihydrobiopterin(in) + a dicarboxylate(out). The enzyme catalyses L-sepiapterin(out) + a dicarboxylate(in) = L-sepiapterin(in) + a dicarboxylate(out). It carries out the reaction prostaglandin F2alpha(out) + a dicarboxylate(in) = prostaglandin F2alpha(in) + a dicarboxylate(out). It catalyses the reaction prostaglandin E2(out) + a dicarboxylate(in) = prostaglandin E2(in) + a dicarboxylate(out). The catalysed reaction is 3',5'-cyclic AMP(out) + a dicarboxylate(in) = 3',5'-cyclic AMP(in) + a dicarboxylate(out). The enzyme catalyses 3',5'-cyclic GMP(out) + a dicarboxylate(in) = 3',5'-cyclic GMP(in) + a dicarboxylate(out). It carries out the reaction urate(out) + a dicarboxylate(in) = urate(in) + a dicarboxylate(out). It catalyses the reaction kynurenate(out) + glutarate(in) = kynurenate(in) + glutarate(out). The catalysed reaction is (indol-3-yl)acetate(out) + a dicarboxylate(in) = (indol-3-yl)acetate(in) + a dicarboxylate(out). The enzyme catalyses indoxyl sulfate(out) + a dicarboxylate(in) = indoxyl sulfate(in) + a dicarboxylate(out). It carries out the reaction N-benzoylglycine(out) + a dicarboxylate(in) = N-benzoylglycine(in) + a dicarboxylate(out). It catalyses the reaction 3-carboxy-4-methyl-5-propyl-2-furanpropanoate(out) + a dicarboxylate(in) = 3-carboxy-4-methyl-5-propyl-2-furanpropanoate(in) + a dicarboxylate(out). Functionally, secondary active transporter that functions as a Na(+)-independent organic anion (OA)/dicarboxylate antiporter where the uptake of one molecule of OA into the cell is coupled with an efflux of one molecule of intracellular dicarboxylate such as 2-oxoglutarate or glutarate. Mediates the uptake of OA across the basolateral side of proximal tubule epithelial cells, thereby contributing to the renal elimination of endogenous OA from the systemic circulation into the urine. Functions as a biopterin transporters involved in the uptake and the secretion of coenzymes tetrahydrobiopterin (BH4), dihydrobiopterin (BH2) and sepiapterin to urine, thereby determining baseline levels of blood biopterins. Transports prostaglandin E2 (PGE2) and prostaglandin F2-alpha (PGF2-alpha) and may contribute to their renal excretion. Involved in the transport of neuroactive tryptophan metabolites kynurenate (KYNA) and xanthurenate (XA). May transport glutamate. Also involved in the disposition of uremic toxins and potentially toxic xenobiotics by the renal organic anion secretory pathway, helping reduce their undesired toxicological effects on the body. Uremic toxins include the indoxyl sulfate (IS), hippurate/N-benzoylglycine (HA), indole acetate (IA) and 3-carboxy-4- methyl-5-propyl-2-furanpropionate(CMPF) and urate. Xenobiotics include the mycotoxin ochratoxin (OTA). May also contribute to the transport of organic compounds in testes across the blood-testis-barrier. This Mus musculus (Mouse) protein is Solute carrier family 22 member 6.